Consider the following 84-residue polypeptide: uncharacterized protein (84 aa).

Residues 5-31 (KIQEIINELDNLMNRERKYIELVATVE) adopt a coiled-coil conformation.

This is an uncharacterized protein from Methanocaldococcus jannaschii (strain ATCC 43067 / DSM 2661 / JAL-1 / JCM 10045 / NBRC 100440) (Methanococcus jannaschii).